The sequence spans 263 residues: Imidazole glycerol phosphate synthase subunit HisF (263 aa).

Active-site residues include aspartate 11 and aspartate 130.

It belongs to the HisA/HisF family. Heterodimer of HisH and HisF.

The protein resides in the cytoplasm. The enzyme catalyses 5-[(5-phospho-1-deoxy-D-ribulos-1-ylimino)methylamino]-1-(5-phospho-beta-D-ribosyl)imidazole-4-carboxamide + L-glutamine = D-erythro-1-(imidazol-4-yl)glycerol 3-phosphate + 5-amino-1-(5-phospho-beta-D-ribosyl)imidazole-4-carboxamide + L-glutamate + H(+). It functions in the pathway amino-acid biosynthesis; L-histidine biosynthesis; L-histidine from 5-phospho-alpha-D-ribose 1-diphosphate: step 5/9. Functionally, IGPS catalyzes the conversion of PRFAR and glutamine to IGP, AICAR and glutamate. The HisF subunit catalyzes the cyclization activity that produces IGP and AICAR from PRFAR using the ammonia provided by the HisH subunit. The protein is Imidazole glycerol phosphate synthase subunit HisF of Synechococcus sp. (strain CC9311).